The following is a 145-amino-acid chain: Aegerolysin Aa-Pri1 (145 aa).

The propeptide occupies methionine 1–arginine 8.

This sequence belongs to the aegerolysin family.

The protein is Aegerolysin Aa-Pri1 (AA-PRI1) of Cyclocybe aegerita (Black poplar mushroom).